The primary structure comprises 354 residues: Uroporphyrinogen decarboxylase (354 aa).

Substrate-binding positions include 27-31 (RQAGR), Asp77, Tyr154, Thr209, and His327.

This sequence belongs to the uroporphyrinogen decarboxylase family. In terms of assembly, homodimer.

The protein localises to the cytoplasm. It catalyses the reaction uroporphyrinogen III + 4 H(+) = coproporphyrinogen III + 4 CO2. It participates in porphyrin-containing compound metabolism; protoporphyrin-IX biosynthesis; coproporphyrinogen-III from 5-aminolevulinate: step 4/4. Its function is as follows. Catalyzes the decarboxylation of four acetate groups of uroporphyrinogen-III to yield coproporphyrinogen-III. This Mannheimia succiniciproducens (strain KCTC 0769BP / MBEL55E) protein is Uroporphyrinogen decarboxylase.